Here is a 223-residue protein sequence, read N- to C-terminus: Large ribosomal subunit protein uL3 (223 aa).

Belongs to the universal ribosomal protein uL3 family. As to quaternary structure, part of the 50S ribosomal subunit. Forms a cluster with proteins L14 and L19.

Its function is as follows. One of the primary rRNA binding proteins, it binds directly near the 3'-end of the 23S rRNA, where it nucleates assembly of the 50S subunit. The protein is Large ribosomal subunit protein uL3 of Cutibacterium acnes (strain DSM 16379 / KPA171202) (Propionibacterium acnes).